A 331-amino-acid chain; its full sequence is DNA double-strand break repair nuclease NurA (331 aa).

Residues aspartate 56 and aspartate 131 each coordinate Mn(2+).

Belongs to the NurA family. Homodimer. Interacts with SSB. Mn(2+) serves as cofactor.

The 5'-3' ssDNA and dsDNA exonuclease and ssDNA endonuclease activities are inhibited by SSB (single-stranded DNA-binding protein). In terms of biological role, involved in DNA double-strand break (DSB) repair. Probably acts with HerA to stimulate resection of the 5' strand and produce the long 3' single-strand that is required for RadA loading. Exhibits both single-stranded endonuclease activity and 5'-3' exonuclease activity on single-stranded and double-stranded DNA. This is DNA double-strand break repair nuclease NurA from Sulfurisphaera tokodaii (strain DSM 16993 / JCM 10545 / NBRC 100140 / 7) (Sulfolobus tokodaii).